Here is a 559-residue protein sequence, read N- to C-terminus: Dihydroxy-acid dehydratase (559 aa).

Mg(2+) is bound at residue Asp78. Residue Cys119 participates in [2Fe-2S] cluster binding. Mg(2+) contacts are provided by Asp120 and Lys121. The residue at position 121 (Lys121) is an N6-carboxylysine. Cys191 contacts [2Fe-2S] cluster. Glu442 serves as a coordination point for Mg(2+). Residue Ser468 is the Proton acceptor of the active site.

This sequence belongs to the IlvD/Edd family. Homodimer. [2Fe-2S] cluster is required as a cofactor. It depends on Mg(2+) as a cofactor.

It catalyses the reaction (2R)-2,3-dihydroxy-3-methylbutanoate = 3-methyl-2-oxobutanoate + H2O. The enzyme catalyses (2R,3R)-2,3-dihydroxy-3-methylpentanoate = (S)-3-methyl-2-oxopentanoate + H2O. Its pathway is amino-acid biosynthesis; L-isoleucine biosynthesis; L-isoleucine from 2-oxobutanoate: step 3/4. It participates in amino-acid biosynthesis; L-valine biosynthesis; L-valine from pyruvate: step 3/4. Its function is as follows. Functions in the biosynthesis of branched-chain amino acids. Catalyzes the dehydration of (2R,3R)-2,3-dihydroxy-3-methylpentanoate (2,3-dihydroxy-3-methylvalerate) into 2-oxo-3-methylpentanoate (2-oxo-3-methylvalerate) and of (2R)-2,3-dihydroxy-3-methylbutanoate (2,3-dihydroxyisovalerate) into 2-oxo-3-methylbutanoate (2-oxoisovalerate), the penultimate precursor to L-isoleucine and L-valine, respectively. This chain is Dihydroxy-acid dehydratase, found in Agathobacter rectalis (strain ATCC 33656 / DSM 3377 / JCM 17463 / KCTC 5835 / VPI 0990) (Eubacterium rectale).